A 186-amino-acid polypeptide reads, in one-letter code: Serine hydrolase RBBP9 (186 aa).

Residues 63 to 67 are involved in binding to RB1; it reads LHCDE. Residues Ser75, Asp138, and His165 each act as charge relay system in the active site.

It belongs to the RBBP9 family. As to quaternary structure, interacts with RB1; the interaction disrupts RB1 binding to E2F1. Interacts with RBL1 and RBL2. Highly expressed in the spleen, testis and kidney. Also found in the heart, liver, lung and brain.

It catalyses the reaction valacyclovir + H2O = acyclovir + L-valine + H(+). Its function is as follows. Serine hydrolase. Catalyzes the hydrolytic activation of amino acid ester of the antiviral prodrug valacyclovir to its corresponding active drug, acyclovir. May negatively regulate basal or autocrine TGF-beta signaling by suppressing SMAD2-SMAD3 phosphorylation. May play a role in the transformation process due to its capacity to confer resistance to the growth-inhibitory effects of TGF-beta through interaction with RB1 and the subsequent displacement of E2F1. The protein is Serine hydrolase RBBP9 of Rattus norvegicus (Rat).